Here is a 117-residue protein sequence, read N- to C-terminus: LIM and senescent cell antigen-like-containing domain protein 3 (117 aa).

In terms of domain architecture, LIM zinc-binding spans 70 to 117 (ATCERCKGGFAPAETIVNSNGELYHEQCFVCAQCFQQFPEGLFYEERT).

Detected in testis.

Its subcellular location is the cytoplasm. The chain is LIM and senescent cell antigen-like-containing domain protein 3 (LIMS3) from Homo sapiens (Human).